Reading from the N-terminus, the 167-residue chain is Phosphopantetheine adenylyltransferase (167 aa).

A substrate-binding site is contributed by threonine 9. ATP contacts are provided by residues 9-10 (TF) and histidine 17. Substrate is bound by residues lysine 41, leucine 73, and arginine 87. Residues 88–90 (GLR), glutamate 98, and 123–129 (YQFISGT) contribute to the ATP site.

It belongs to the bacterial CoaD family. Homohexamer. Mg(2+) is required as a cofactor.

It is found in the cytoplasm. It catalyses the reaction (R)-4'-phosphopantetheine + ATP + H(+) = 3'-dephospho-CoA + diphosphate. Its pathway is cofactor biosynthesis; coenzyme A biosynthesis; CoA from (R)-pantothenate: step 4/5. Functionally, reversibly transfers an adenylyl group from ATP to 4'-phosphopantetheine, yielding dephospho-CoA (dPCoA) and pyrophosphate. The sequence is that of Phosphopantetheine adenylyltransferase from Ralstonia pickettii (strain 12J).